The primary structure comprises 302 residues: Homoserine kinase (302 aa).

Residue Lys-90–Ala-100 participates in ATP binding.

It belongs to the GHMP kinase family. Homoserine kinase subfamily.

It is found in the cytoplasm. The enzyme catalyses L-homoserine + ATP = O-phospho-L-homoserine + ADP + H(+). It functions in the pathway amino-acid biosynthesis; L-threonine biosynthesis; L-threonine from L-aspartate: step 4/5. Its function is as follows. Catalyzes the ATP-dependent phosphorylation of L-homoserine to L-homoserine phosphate. In Methanococcus vannielii (strain ATCC 35089 / DSM 1224 / JCM 13029 / OCM 148 / SB), this protein is Homoserine kinase.